Consider the following 95-residue polypeptide: Alpha-bungarotoxin isoform V31 (95 aa).

Positions 1–21 are cleaved as a signal peptide; the sequence is MKTLLLTLVVVTIVCLDLGYT. 5 disulfide bridges follow: Cys24–Cys44, Cys37–Cys65, Cys50–Cys54, Cys69–Cys80, and Cys81–Cys86.

The protein belongs to the three-finger toxin family. Long-chain subfamily. Type II alpha-neurotoxin sub-subfamily. As to quaternary structure, monomer in solution, homodimer in crystal state. As to expression, expressed by the venom gland.

The protein localises to the secreted. In terms of biological role, binds with high affinity to muscular (alpha-1/CHRNA1) and neuronal (alpha-7/CHRNA7) nicotinic acetylcholine receptor (nAChR) and inhibits acetylcholine from binding to the receptor, thereby impairing neuromuscular and neuronal transmission. The polypeptide is Alpha-bungarotoxin isoform V31 (Bungarus multicinctus (Many-banded krait)).